Reading from the N-terminus, the 199-residue chain is 3-isopropylmalate dehydratase small subunit (199 aa).

The protein belongs to the LeuD family. LeuD type 1 subfamily. As to quaternary structure, heterodimer of LeuC and LeuD.

The enzyme catalyses (2R,3S)-3-isopropylmalate = (2S)-2-isopropylmalate. It participates in amino-acid biosynthesis; L-leucine biosynthesis; L-leucine from 3-methyl-2-oxobutanoate: step 2/4. Its function is as follows. Catalyzes the isomerization between 2-isopropylmalate and 3-isopropylmalate, via the formation of 2-isopropylmaleate. The chain is 3-isopropylmalate dehydratase small subunit from Bacillus pumilus (strain SAFR-032).